The chain runs to 426 residues: DNA polymerase processivity factor component OPG148 (426 aa).

Belongs to the orthopoxvirus OPG148 family. Interacts with the DNA polymerase catalytic subunit OPG071. Interacts with UDG/OPG116. Component of the uracil-DNA glycosylase(UDG)-OPG148-polymerase complex; OPG148 and UDG form a heterodimeric processivity factor that associates with OPG071 to form the processive polymerase holoenzyme. Interacts with OPG117.

Functionally, plays an essential role in viral DNA replication by acting as the polymerase processivity factor together with protein OPG116. Serves as a bridge which links the DNA polymerase OPG071 and the uracil DNA glycosylase. In Cynomys gunnisoni (Gunnison's prairie dog), this protein is DNA polymerase processivity factor component OPG148 (OPG148).